The sequence spans 341 residues: Uroporphyrinogen decarboxylase (341 aa).

Substrate contacts are provided by residues 23-27, aspartate 73, tyrosine 147, serine 202, and histidine 318; that span reads RQAGR.

It belongs to the uroporphyrinogen decarboxylase family. Homodimer.

The protein localises to the cytoplasm. The catalysed reaction is uroporphyrinogen III + 4 H(+) = coproporphyrinogen III + 4 CO2. It functions in the pathway porphyrin-containing compound metabolism; protoporphyrin-IX biosynthesis; coproporphyrinogen-III from 5-aminolevulinate: step 4/4. Catalyzes the decarboxylation of four acetate groups of uroporphyrinogen-III to yield coproporphyrinogen-III. In Novosphingobium aromaticivorans (strain ATCC 700278 / DSM 12444 / CCUG 56034 / CIP 105152 / NBRC 16084 / F199), this protein is Uroporphyrinogen decarboxylase.